A 186-amino-acid polypeptide reads, in one-letter code: Peptidyl-tRNA hydrolase (186 aa).

Y14 is a tRNA binding site. H19 acts as the Proton acceptor in catalysis. TRNA-binding residues include Y61, N63, and N107.

The protein belongs to the PTH family. Monomer.

It is found in the cytoplasm. The catalysed reaction is an N-acyl-L-alpha-aminoacyl-tRNA + H2O = an N-acyl-L-amino acid + a tRNA + H(+). Its function is as follows. Hydrolyzes ribosome-free peptidyl-tRNAs (with 1 or more amino acids incorporated), which drop off the ribosome during protein synthesis, or as a result of ribosome stalling. In terms of biological role, catalyzes the release of premature peptidyl moieties from peptidyl-tRNA molecules trapped in stalled 50S ribosomal subunits, and thus maintains levels of free tRNAs and 50S ribosomes. In Helicobacter pylori (strain J99 / ATCC 700824) (Campylobacter pylori J99), this protein is Peptidyl-tRNA hydrolase.